Here is a 271-residue protein sequence, read N- to C-terminus: MGYISNNNLINYLPLSTTQPPLLLTHCDINGNDHHQLITASSGEHDIDERKNNIPAAATLRWNPTPEQITTLEELYRSGTRTPTTEQIQQIASKLRKYGRIEGKNVFYWFQNHKARERLKRRRREGGAIIKPHKDVKDSSSGGHRVDQTKLCPSFPHTNRPQPQHELDPASYNKDNNANNEDHGTTEESDQRASEVGKYATWRNLVTWSITQQPEEINIDENVNGEEEETRDNRTLNLFPVREYQEKTGRLIEKTKACNYCYYYEFMPLKN.

The segment at residues 57–121 (AATLRWNPTP…NHKARERLKR (65 aa)) is a DNA-binding region (homeobox; WUS-type). The tract at residues 118–195 (RLKRRRREGG…TEESDQRASE (78 aa)) is disordered. 2 stretches are compositionally biased toward basic and acidic residues: residues 132 to 148 (PHKD…RVDQ) and 180 to 195 (NEDH…RASE).

It belongs to the WUS homeobox family. In terms of tissue distribution, highly expressed in developing ovules. Present in developing primordia and differentiating organs but absent in mature organs.

It is found in the nucleus. Functionally, transcription factor that plays a central role in ovule patterning by regulating cell proliferation of the maternal integuments and differentiation of the maegaspore mother cell (MCC). Involved in AGAMOUS (AG) repression in leaves. This Arabidopsis thaliana (Mouse-ear cress) protein is WUSCHEL-related homeobox 6 (WOX6).